The sequence spans 714 residues: Hormonally up-regulated neu tumor-associated kinase (714 aa).

Low complexity predominate over residues 1–16; sequence MPAAAGDGLLGEPAAP. The interval 1 to 28 is disordered; sequence MPAAAGDGLLGEPAAPGGDGGAEDTTRP. Residues 62–320 form the Protein kinase domain; it reads LIGSRKLGEG…IQQALANRWL (259 aa). Residues 68-76 and Lys-91 contribute to the ATP site; that span reads LGEGSFAKV. The active-site Proton acceptor is the Asp-186. Residues 624-635 show a composition bias toward basic and acidic residues; that stretch reads HEEKNSPPKEEG. Disordered regions lie at residues 624–658 and 674–714; these read HEEK…NCVK and KRHQ…KGQC. Polar residues predominate over residues 692–703; it reads SPLQPTAPSSLS.

It belongs to the protein kinase superfamily. CAMK Ser/Thr protein kinase family. SNF1 subfamily.

It catalyses the reaction L-seryl-[protein] + ATP = O-phospho-L-seryl-[protein] + ADP + H(+). The catalysed reaction is L-threonyl-[protein] + ATP = O-phospho-L-threonyl-[protein] + ADP + H(+). This chain is Hormonally up-regulated neu tumor-associated kinase (Hunk), found in Mus musculus (Mouse).